The primary structure comprises 156 residues: 6,7-dimethyl-8-ribityllumazine synthase (156 aa).

5-amino-6-(D-ribitylamino)uracil contacts are provided by residues F23, 57–59 (AYE), and 81–83 (AII). Residue 86–87 (GT) coordinates (2S)-2-hydroxy-3-oxobutyl phosphate. The active-site Proton donor is H89. F114 contributes to the 5-amino-6-(D-ribitylamino)uracil binding site. R128 is a (2S)-2-hydroxy-3-oxobutyl phosphate binding site.

This sequence belongs to the DMRL synthase family.

The catalysed reaction is (2S)-2-hydroxy-3-oxobutyl phosphate + 5-amino-6-(D-ribitylamino)uracil = 6,7-dimethyl-8-(1-D-ribityl)lumazine + phosphate + 2 H2O + H(+). Its pathway is cofactor biosynthesis; riboflavin biosynthesis; riboflavin from 2-hydroxy-3-oxobutyl phosphate and 5-amino-6-(D-ribitylamino)uracil: step 1/2. In terms of biological role, catalyzes the formation of 6,7-dimethyl-8-ribityllumazine by condensation of 5-amino-6-(D-ribitylamino)uracil with 3,4-dihydroxy-2-butanone 4-phosphate. This is the penultimate step in the biosynthesis of riboflavin. This chain is 6,7-dimethyl-8-ribityllumazine synthase, found in Helicobacter pylori (strain G27).